The following is a 275-amino-acid chain: Dermonecrotic toxin SpeSicTox-betaIIA3ii (275 aa).

His-5 is an active-site residue. Residues Glu-25 and Asp-27 each contribute to the Mg(2+) site. The Nucleophile role is filled by His-41. Disulfide bonds link Cys-45–Cys-51 and Cys-47–Cys-190. Asp-85 is a binding site for Mg(2+).

The protein belongs to the arthropod phospholipase D family. Class II subfamily. Mg(2+) serves as cofactor. In terms of tissue distribution, expressed by the venom gland.

The protein resides in the secreted. The enzyme catalyses an N-(acyl)-sphingosylphosphocholine = an N-(acyl)-sphingosyl-1,3-cyclic phosphate + choline. The catalysed reaction is an N-(acyl)-sphingosylphosphoethanolamine = an N-(acyl)-sphingosyl-1,3-cyclic phosphate + ethanolamine. It catalyses the reaction a 1-acyl-sn-glycero-3-phosphocholine = a 1-acyl-sn-glycero-2,3-cyclic phosphate + choline. It carries out the reaction a 1-acyl-sn-glycero-3-phosphoethanolamine = a 1-acyl-sn-glycero-2,3-cyclic phosphate + ethanolamine. Dermonecrotic toxins cleave the phosphodiester linkage between the phosphate and headgroup of certain phospholipids (sphingolipid and lysolipid substrates), forming an alcohol (often choline) and a cyclic phosphate. This toxin acts on sphingomyelin (SM). It may also act on ceramide phosphoethanolamine (CPE), lysophosphatidylcholine (LPC) and lysophosphatidylethanolamine (LPE), but not on lysophosphatidylserine (LPS), and lysophosphatidylglycerol (LPG). It acts by transphosphatidylation, releasing exclusively cyclic phosphate products as second products. Induces dermonecrosis, hemolysis, increased vascular permeability, edema, inflammatory response, and platelet aggregation. The chain is Dermonecrotic toxin SpeSicTox-betaIIA3ii from Sicarius peruensis (Six-eyed sand spider).